The sequence spans 147 residues: Hemoglobin anodic subunit beta (147 aa).

Residues 2–147 form the Globin domain; it reads EWTDGERTAI…VTSALARQYH (146 aa). Heme b is bound by residues His-63 and His-92.

Belongs to the globin family. In terms of assembly, heterotetramer of two alpha chains and two beta chains. Red blood cells.

Involved in oxygen transport from gills to the various peripheral tissues. The protein is Hemoglobin anodic subunit beta of Gymnothorax unicolor (Brown moray).